The primary structure comprises 583 residues: Nuclear hormone receptor family member nhr-31 (583 aa).

The disordered stretch occupies residues 43–77; it reads DLRTSGATSSSGPATSYIIRPSDKQPTVSSGGSQN. A compositionally biased stretch (low complexity) spans 46–58; it reads TSGATSSSGPATS. Residues 66–77 show a composition bias toward polar residues; the sequence is KQPTVSSGGSQN. The nuclear receptor DNA-binding region spans 79-154; the sequence is DSVCAVCGDG…AGMDPKAVRP (76 aa). 2 consecutive NR C4-type zinc fingers follow at residues 82-102 and 118-142; these read CAVCGDGIAKLHYGVLACYGC and CRFSNNCIVDKFQRNSCRYCRFQRC. Residues 195–464 form the NR LBD domain; the sequence is ETRILLMQLM…DNLLAEMFGD (270 aa).

This sequence belongs to the nuclear hormone receptor family.

The protein resides in the nucleus. Its function is as follows. Orphan nuclear receptor. This chain is Nuclear hormone receptor family member nhr-31 (nhr-31), found in Caenorhabditis elegans.